The sequence spans 164 residues: 3-dehydroquinate dehydratase (164 aa).

Y22 acts as the Proton acceptor in catalysis. Residues N73, H79, and D86 each contribute to the substrate site. H99 serves as the catalytic Proton donor. Residues 100–101 (IS) and R110 contribute to the substrate site.

This sequence belongs to the type-II 3-dehydroquinase family. As to quaternary structure, homododecamer.

The enzyme catalyses 3-dehydroquinate = 3-dehydroshikimate + H2O. Its pathway is metabolic intermediate biosynthesis; chorismate biosynthesis; chorismate from D-erythrose 4-phosphate and phosphoenolpyruvate: step 3/7. In terms of biological role, catalyzes a trans-dehydration via an enolate intermediate. This chain is 3-dehydroquinate dehydratase, found in Aliarcobacter butzleri (strain RM4018) (Arcobacter butzleri).